The sequence spans 163 residues: Peptide methionine sulfoxide reductase MsrA 1 (163 aa).

Cys21 is an active-site residue.

Belongs to the MsrA Met sulfoxide reductase family.

The catalysed reaction is L-methionyl-[protein] + [thioredoxin]-disulfide + H2O = L-methionyl-(S)-S-oxide-[protein] + [thioredoxin]-dithiol. It carries out the reaction [thioredoxin]-disulfide + L-methionine + H2O = L-methionine (S)-S-oxide + [thioredoxin]-dithiol. Its function is as follows. Has an important function as a repair enzyme for proteins that have been inactivated by oxidation. Catalyzes the reversible oxidation-reduction of methionine sulfoxide in proteins to methionine. In Nostoc sp. (strain PCC 7120 / SAG 25.82 / UTEX 2576), this protein is Peptide methionine sulfoxide reductase MsrA 1 (msrA1).